The following is a 145-amino-acid chain: MKFTIERSHLIKPLQQVSGALGGRPTLPILGNLLLKVEDNVLSMTATDLEVELVSKVTLEGDFEAGSITVPSRKFLDICRGLPDDSIITFVLEGDRVQVRSGRSRFSLATLPANDFPNIEDWQSEVEVSLTQSDLRTLIEKTQFS.

It belongs to the beta sliding clamp family. Forms a ring-shaped head-to-tail homodimer around DNA which binds and tethers DNA polymerases and other proteins to the DNA. The DNA replisome complex has a single clamp-loading complex (3 tau and 1 each of delta, delta', psi and chi subunits) which binds 3 Pol III cores (1 core on the leading strand and 2 on the lagging strand) each with a beta sliding clamp dimer. Additional proteins in the replisome are other copies of gamma, psi and chi, Ssb, DNA helicase and RNA primase.

It localises to the cytoplasm. Its function is as follows. Confers DNA tethering and processivity to DNA polymerases and other proteins. Acts as a clamp, forming a ring around DNA (a reaction catalyzed by the clamp-loading complex) which diffuses in an ATP-independent manner freely and bidirectionally along dsDNA. Initially characterized for its ability to contact the catalytic subunit of DNA polymerase III (Pol III), a complex, multichain enzyme responsible for most of the replicative synthesis in bacteria; Pol III exhibits 3'-5' exonuclease proofreading activity. The beta chain is required for initiation of replication as well as for processivity of DNA replication. This is Beta sliding clamp (dnaN) from Vibrio harveyi (Beneckea harveyi).